The sequence spans 365 residues: Transcription factor aptf-1 (365 aa).

2 disordered regions span residues 13–40 (EFVRGSQCDEEDEEEQQRQSSQRPPFYE) and 93–126 (TPPQQQQQQGTGGSGEEDYCIPKSEDRDHSSNYS). The interval 223–356 (RRKQANVTAW…MIDESIKYID (134 aa)) is H-S-H (helix-span-helix), dimerization.

The protein belongs to the AP-2 family. In terms of assembly, binds DNA as a dimer. Expressed in five interneurons AIB, RIB and RIS.

The protein localises to the nucleus. Functionally, transcription factor, which is required in the single sleep-active ring interneuron RIS for sleep-like behavioral quiescence induced by neuropeptide signaling in larvae. Regulates gene expression of sleep-inducing FMRFamide-like neuropeptide flp-11 in RIS. The polypeptide is Transcription factor aptf-1 (Caenorhabditis elegans).